We begin with the raw amino-acid sequence, 1462 residues long: Iron-sulfur cluster assembly protein SufD (1462 aa).

Disordered stretches follow at residues 500-525 (IDNN…DNPY), 938-970 (NQNK…GTEQ), and 1111-1153 (NIPS…EKEE). Positions 510-523 (NNNNNNNNNNNCDN) are enriched in low complexity. The span at 961–970 (HIQDEQGTEQ) shows a compositional bias: basic and acidic residues. Positions 1111 to 1136 (NIPSNNKQTNSNNNSEYNNEQNNCSN) are enriched in low complexity.

The protein belongs to the iron-sulfur cluster assembly SufBD family. In terms of assembly, component of a complex composed of SufB, SufC and SufD in a stoichiometric ratio of 1:2:1. Interacts with SufB. Interacts with SufC; the interaction enhances the ATPase activity of SufC. Proteolytically cleaved.

It localises to the plastid. Its subcellular location is the apicoplast. It functions in the pathway cofactor biosynthesis; iron-sulfur cluster biosynthesis. Participates in the sulfur mobilization (SUF) pathway for iron-sulfur (Fe-S) cluster biogenesis. As part of a complex consisting of SufB-SufC(2)-SufD, involved in assembly of [4Fe-4S] clusters. Enhances the ATPase activity of SufC. This Plasmodium falciparum (isolate 3D7) protein is Iron-sulfur cluster assembly protein SufD.